The sequence spans 227 residues: Cytochrome c oxidase subunit 2 (227 aa).

At Met1–Ser14 the chain is on the mitochondrial intermembrane side. A helical transmembrane segment spans residues Pro15–Met45. Topologically, residues Leu46–Gln59 are mitochondrial matrix. The helical transmembrane segment at Glu60–Met87 threads the bilayer. Over Asp88–Leu227 the chain is Mitochondrial intermembrane. Residues His161, Cys196, Glu198, Cys200, His204, and Met207 each coordinate Cu cation. Glu198 lines the Mg(2+) pocket.

This sequence belongs to the cytochrome c oxidase subunit 2 family. As to quaternary structure, component of the cytochrome c oxidase (complex IV, CIV), a multisubunit enzyme composed of 14 subunits. The complex is composed of a catalytic core of 3 subunits MT-CO1, MT-CO2 and MT-CO3, encoded in the mitochondrial DNA, and 11 supernumerary subunits COX4I, COX5A, COX5B, COX6A, COX6B, COX6C, COX7A, COX7B, COX7C, COX8 and NDUFA4, which are encoded in the nuclear genome. The complex exists as a monomer or a dimer and forms supercomplexes (SCs) in the inner mitochondrial membrane with NADH-ubiquinone oxidoreductase (complex I, CI) and ubiquinol-cytochrome c oxidoreductase (cytochrome b-c1 complex, complex III, CIII), resulting in different assemblies (supercomplex SCI(1)III(2)IV(1) and megacomplex MCI(2)III(2)IV(2)). Found in a complex with TMEM177, COA6, COX18, COX20, SCO1 and SCO2. Interacts with TMEM177 in a COX20-dependent manner. Interacts with COX20. Interacts with COX16. Cu cation serves as cofactor.

The protein localises to the mitochondrion inner membrane. The catalysed reaction is 4 Fe(II)-[cytochrome c] + O2 + 8 H(+)(in) = 4 Fe(III)-[cytochrome c] + 2 H2O + 4 H(+)(out). Functionally, component of the cytochrome c oxidase, the last enzyme in the mitochondrial electron transport chain which drives oxidative phosphorylation. The respiratory chain contains 3 multisubunit complexes succinate dehydrogenase (complex II, CII), ubiquinol-cytochrome c oxidoreductase (cytochrome b-c1 complex, complex III, CIII) and cytochrome c oxidase (complex IV, CIV), that cooperate to transfer electrons derived from NADH and succinate to molecular oxygen, creating an electrochemical gradient over the inner membrane that drives transmembrane transport and the ATP synthase. Cytochrome c oxidase is the component of the respiratory chain that catalyzes the reduction of oxygen to water. Electrons originating from reduced cytochrome c in the intermembrane space (IMS) are transferred via the dinuclear copper A center (CU(A)) of subunit 2 and heme A of subunit 1 to the active site in subunit 1, a binuclear center (BNC) formed by heme A3 and copper B (CU(B)). The BNC reduces molecular oxygen to 2 water molecules using 4 electrons from cytochrome c in the IMS and 4 protons from the mitochondrial matrix. The polypeptide is Cytochrome c oxidase subunit 2 (MT-CO2) (Equus caballus (Horse)).